The primary structure comprises 447 residues: Probable cytosol aminopeptidase (447 aa).

Mn(2+)-binding residues include Lys-218 and Asp-223. Residue Lys-230 is part of the active site. Positions 241, 300, and 302 each coordinate Mn(2+). Arg-304 is an active-site residue.

The protein belongs to the peptidase M17 family. Mn(2+) serves as cofactor.

The protein localises to the cytoplasm. The catalysed reaction is Release of an N-terminal amino acid, Xaa-|-Yaa-, in which Xaa is preferably Leu, but may be other amino acids including Pro although not Arg or Lys, and Yaa may be Pro. Amino acid amides and methyl esters are also readily hydrolyzed, but rates on arylamides are exceedingly low.. It carries out the reaction Release of an N-terminal amino acid, preferentially leucine, but not glutamic or aspartic acids.. Functionally, presumably involved in the processing and regular turnover of intracellular proteins. Catalyzes the removal of unsubstituted N-terminal amino acids from various peptides. The chain is Probable cytosol aminopeptidase (pepA) from Mycoplasma genitalium (strain ATCC 33530 / DSM 19775 / NCTC 10195 / G37) (Mycoplasmoides genitalium).